Reading from the N-terminus, the 264-residue chain is uncharacterized protein (264 aa).

A divalent metal cation-binding residues include histidine 7, histidine 9, glutamate 102, histidine 138, histidine 163, and aspartate 213.

It belongs to the metallo-dependent hydrolases superfamily. TatD-type hydrolase family. Requires a divalent metal cation as cofactor.

This is an uncharacterized protein from Buchnera aphidicola subsp. Acyrthosiphon pisum (strain APS) (Acyrthosiphon pisum symbiotic bacterium).